The sequence spans 111 residues: Transcription initiation factor IIA subunit 2 (111 aa).

This sequence belongs to the TFIIA subunit 2 family. In terms of assembly, TFIIA is a heterodimer of the large unprocessed subunit 1 and a small subunit gamma. It was originally believed to be a heterotrimer of an alpha, a beta and a gamma subunit. Interacts with NCOA6 general coactivator. TFIIA forms a complex with TBP.

Its subcellular location is the nucleus. Its function is as follows. TFIIA is a component of the transcription machinery of RNA polymerase II and plays an important role in transcriptional activation. TFIIA in a complex with TBP mediates transcriptional activity. This is Transcription initiation factor IIA subunit 2 (gtf2a2) from Paralichthys olivaceus (Bastard halibut).